Reading from the N-terminus, the 207-residue chain is CASP-like protein 1D1 (207 aa).

Topologically, residues 1-40 (MATVDGTTAPSSGGKTATVALESGGGRYGGPAPAKCSGAN) are cytoplasmic. The chain crosses the membrane as a helical span at residues 41-61 (LALRALLFAVSLSALVVLVTA). The Extracellular segment spans residues 62-89 (KQTVMVPFVIRPPQFILAPVPAKYTHSP). A helical membrane pass occupies residues 90–110 (ALIYLLAALCATCFYSLITAI). Topologically, residues 111 to 124 (SSVRLLSSSACSAK) are cytoplasmic. A helical membrane pass occupies residues 125–145 (TLFYLILLDVFYAAVMASATG). Over 146 to 176 (TAGAVAWVGLKGNSHTRWNKICNVYGKFCRH) the chain is Extracellular. Residues 177–197 (IGSSTFLALIAAIVLVLLAFL) form a helical membrane-spanning segment. Topologically, residues 198-207 (NAYSLYRRSR) are cytoplasmic.

The protein belongs to the Casparian strip membrane proteins (CASP) family. Homodimer and heterodimers.

The protein resides in the cell membrane. The chain is CASP-like protein 1D1 from Oryza sativa subsp. japonica (Rice).